Reading from the N-terminus, the 95-residue chain is Small ribosomal subunit protein bS6 (95 aa).

This sequence belongs to the bacterial ribosomal protein bS6 family.

Binds together with bS18 to 16S ribosomal RNA. In Rhodococcus jostii (strain RHA1), this protein is Small ribosomal subunit protein bS6.